A 154-amino-acid chain; its full sequence is D-aminoacyl-tRNA deacylase (154 aa).

A Gly-cisPro motif, important for rejection of L-amino acids motif is present at residues 142–143 (GP).

The protein belongs to the DTD family. As to quaternary structure, homodimer.

It is found in the cytoplasm. The enzyme catalyses glycyl-tRNA(Ala) + H2O = tRNA(Ala) + glycine + H(+). It catalyses the reaction a D-aminoacyl-tRNA + H2O = a tRNA + a D-alpha-amino acid + H(+). In terms of biological role, an aminoacyl-tRNA editing enzyme that deacylates mischarged D-aminoacyl-tRNAs. Also deacylates mischarged glycyl-tRNA(Ala), protecting cells against glycine mischarging by AlaRS. Acts via tRNA-based rather than protein-based catalysis; rejects L-amino acids rather than detecting D-amino acids in the active site. By recycling D-aminoacyl-tRNA to D-amino acids and free tRNA molecules, this enzyme counteracts the toxicity associated with the formation of D-aminoacyl-tRNA entities in vivo and helps enforce protein L-homochirality. The chain is D-aminoacyl-tRNA deacylase from Polaromonas sp. (strain JS666 / ATCC BAA-500).